The sequence spans 108 residues: UPF0060 membrane protein KPK_2870 (108 aa).

4 helical membrane passes run 6-26 (LLFF…WLWL), 29-49 (GATP…VWLL), 61-81 (AAYG…VDGV), and 86-106 (YDWA…AGWG).

The protein belongs to the UPF0060 family.

It is found in the cell inner membrane. This Klebsiella pneumoniae (strain 342) protein is UPF0060 membrane protein KPK_2870.